The following is a 316-amino-acid chain: Fe-S cluster assembly protein DRE2 (316 aa).

The interval valine 7 to valine 139 is N-terminal SAM-like domain. A linker region spans residues threonine 140–leucine 208. Residues cysteine 218, cysteine 229, cysteine 232, and cysteine 234 each coordinate [2Fe-2S] cluster. Residues cysteine 218–cysteine 234 are fe-S binding site A. Cysteine 279, cysteine 282, cysteine 290, and cysteine 293 together coordinate [4Fe-4S] cluster. 2 short sequence motifs (cx2C motif) span residues cysteine 279–cysteine 282 and cysteine 290–cysteine 293. The segment at cysteine 279–cysteine 293 is fe-S binding site B.

Belongs to the anamorsin family. As to quaternary structure, monomer. Interacts with TAH18. Interacts with MIA40. [2Fe-2S] cluster serves as cofactor. It depends on [4Fe-4S] cluster as a cofactor.

Its subcellular location is the cytoplasm. It is found in the mitochondrion intermembrane space. In terms of biological role, component of the cytosolic iron-sulfur (Fe-S) protein assembly (CIA) machinery required for the maturation of extramitochondrial Fe-S proteins. Part of an electron transfer chain functioning in an early step of cytosolic Fe-S biogenesis, facilitating the de novo assembly of a [4Fe-4S] cluster on the scaffold complex CFD1-NBP35. Electrons are transferred to DRE2 from NADPH via the FAD- and FMN-containing protein TAH18. TAH18-DRE2 are also required for the assembly of the diferric tyrosyl radical cofactor of ribonucleotide reductase (RNR), probably by providing electrons for reduction during radical cofactor maturation in the catalytic small subunit RNR2. The polypeptide is Fe-S cluster assembly protein DRE2 (Fusarium vanettenii (strain ATCC MYA-4622 / CBS 123669 / FGSC 9596 / NRRL 45880 / 77-13-4) (Fusarium solani subsp. pisi)).